The following is an 873-amino-acid chain: Probable inorganic carbon transporter subunit DabA (873 aa).

4 residues coordinate Zn(2+): Cys-393, Asp-395, His-575, and Cys-590.

This sequence belongs to the inorganic carbon transporter (TC 9.A.2) DabA family. As to quaternary structure, forms a complex with DabB. The cofactor is Zn(2+).

It is found in the cell membrane. Functionally, part of an energy-coupled inorganic carbon pump. In Bacillus licheniformis (strain ATCC 14580 / DSM 13 / JCM 2505 / CCUG 7422 / NBRC 12200 / NCIMB 9375 / NCTC 10341 / NRRL NRS-1264 / Gibson 46), this protein is Probable inorganic carbon transporter subunit DabA.